An 80-amino-acid polypeptide reads, in one-letter code: Photosystem II extrinsic protein V (80 aa).

Met47 lines the heme pocket.

It belongs to the cytochrome c family. PsbV subfamily. PSII is composed of 1 copy each of membrane proteins PsbA, PsbB, PsbC, PsbD, PsbE, PsbF, PsbH, PsbI, PsbJ, PsbK, PsbL, PsbM, PsbT, PsbY, PsbZ, Psb30/Ycf12, at least 3 peripheral proteins of the oxygen-evolving complex and a large number of cofactors. It forms dimeric complexes. It depends on heme as a cofactor.

It localises to the plastid. The protein localises to the chloroplast thylakoid membrane. Functionally, one of the extrinsic, lumenal subunits of photosystem II (PSII). PSII is a light-driven water plastoquinone oxidoreductase, using light energy to abstract electrons from H(2)O, generating a proton gradient subsequently used for ATP formation. The extrinsic proteins stabilize the structure of photosystem II oxygen-evolving complex (OEC), the ion environment of oxygen evolution and protect the OEC against heat-induced inactivation. The chain is Photosystem II extrinsic protein V from Thalassiosira weissflogii (Marine diatom).